The primary structure comprises 304 residues: Nod factor export ATP-binding protein I (304 aa).

The 231-residue stretch at 6 to 236 folds into the ABC transporter domain; the sequence is IDFRNVEKRF…EIGCDVIEIY (231 aa). An ATP-binding site is contributed by 38–45; it reads GPNGAGKT.

The protein belongs to the ABC transporter superfamily. Lipooligosaccharide exporter (TC 3.A.1.102) family. As to quaternary structure, the complex is composed of two ATP-binding proteins (NodI) and two transmembrane proteins (NodJ).

It is found in the cell inner membrane. Part of the ABC transporter complex NodIJ involved in the export of the nodulation factors (Nod factors), the bacterial signal molecules that induce symbiosis and subsequent nodulation induction. Nod factors are LCO (lipo-chitin oligosaccharide), a modified beta-1,4-linked N-acetylglucosamine oligosaccharide. This subunit is responsible for energy coupling to the transport system. The polypeptide is Nod factor export ATP-binding protein I (Burkholderia lata (strain ATCC 17760 / DSM 23089 / LMG 22485 / NCIMB 9086 / R18194 / 383)).